Reading from the N-terminus, the 2451-residue chain is Reducing polyketide synthase 8 (2451 aa).

The region spanning 12-434 is the Ketosynthase family 3 (KS3) domain; that stretch reads NEPIAIVGSS…GTNAHAILEA (423 aa). Residues Cys174, His313, and His354 each act as for beta-ketoacyl synthase activity in the active site. Residues 538–846 form the Malonyl-CoA:ACP transacylase (MAT) domain; that stretch reads VFTGQGAQWA…GPATETINNM (309 aa). An N-terminal hotdog fold region spans residues 940–1085; sequence HQLLGSASTF…GFLRIELGAP (146 aa). In terms of domain architecture, PKS/mFAS DH spans 940–1254; it reads HQLLGSASTF…LLNLPGSLRS (315 aa). The active-site Proton acceptor; for dehydratase activity is His974. Residues 1100-1254 form a C-terminal hotdog fold region; it reads LIPLDVEELY…LLNLPGSLRS (155 aa). Residue Asp1160 is the Proton donor; for dehydratase activity of the active site. The methyltransfrase (MT) domain stretch occupies residues 1294-1590; sequence LVLFYCQKVL…QHFCSVMLSQ (297 aa). The 179-residue stretch at 2088-2266 folds into the Ketoreductase (KR) domain; that stretch reads TYLLLGLAGD…PGCVVHIGGV (179 aa). Residues 2366–2451 form the Carrier domain; it reads DACLDLLLGG…LAIWRKQVKA (86 aa). Residue Ser2404 is modified to O-(pantetheine 4'-phosphoryl)serine.

Pantetheine 4'-phosphate serves as cofactor.

The protein operates within secondary metabolite biosynthesis. Reducing polyketide synthase; part of the gene cluster that mediates the biosynthesis of fusamarins, isocoumarin derivatives that show moderate cytotoxicity with IC(50) values between 1 and 50 uM. The polyketide synthase FMN1 probably synthesizes two different polyketides, a tetra- and a pentaketide, containinga varying number of double bonds depending on the selective actions of the trans-enoyl reductase FMN2. Chain fusion will presumably be mediated by the KS domain before finally offloading is catalyzed by the alpha/beta hydrolase fold enzyme FMN3. This is Reducing polyketide synthase 8 from Fusarium mangiferae (Mango malformation disease fungus).